A 1058-amino-acid chain; its full sequence is Bromodomain-containing protein 1 (1058 aa).

Over residues 1 to 12 the composition is skewed to basic residues; the sequence is MRRKGRCHRGSA. The disordered stretch occupies residues 1-25; it reads MRRKGRCHRGSAARHPSSPCSIKHS. The interaction with KAT7/HBO1 and histones stretch occupies residues 31–80; that stretch reads LTYAQAQRMVEIEIEGRLHRISIFDPLEIILEDDLTAQEMSECNSNKENS. Phosphoserine is present on Ser-128. The segment at 214–264 adopts a PHD-type 1 zinc-finger fold; sequence DAVCCICMDGECQNSNVILFCDMCNLAVHQECYGVPYIPEGQWLCRHCLQS. The C2HC pre-PHD-type zinc-finger motif lies at 268–301; sequence PADCVLCPNKGGAFKKTDDDRWGHVVCALWIPEV. The PHD-type 2 zinc-finger motif lies at 325–389; it reads LTCYLCKQKG…RKTAYCDVHT (65 aa). Lys-368, Lys-516, and Lys-519 each carry N6-acetyllysine. Residues Lys-554 and Lys-594 each participate in a glycyl lysine isopeptide (Lys-Gly) (interchain with G-Cter in SUMO2) cross-link. The Bromo domain occupies 562–666; that stretch reads LRLTPLTVLL…DQGGVVLRQA (105 aa). The span at 754 to 763 shows a compositional bias: polar residues; that stretch reads KLSQQHSQAP. 2 disordered regions span residues 754–776 and 791–847; these read KLSQQHSQAPPTGAGTGGFEDEA and LETL…AAPR. Ser-803 carries the phosphoserine modification. Position 903 is an N6-acetyllysine (Lys-903). Positions 929 to 1012 constitute a PWWP domain; that stretch reads PLKVVWAKCS…KSKMVPLGVD (84 aa). Residues Ser-1052 and Ser-1055 each carry the phosphoserine modification.

Component of some HBO1 complexes composed of KAT7/HBO1, MEAF6, ING4 and BRD1/BRPF2. Component of the MOZ/MORF complex composed at least of ING5, KAT6A, KAT6B, MEAF6 and one of BRPF1, BRD1/BRPF2 and BRPF3. Interacts (via PHD-type zinc finger domain) with unmodified histone H3. Interacts (via PWWP domain) with dimethylated and trimethylated 'Lys-79' on histone H3.

It is found in the nucleus. The protein localises to the chromosome. In terms of biological role, scaffold subunit of various histone acetyltransferase (HAT) complexes, such as the MOZ/MORF and HBO1 complexes, that acts as a regulator of hematopoiesis. Plays a key role in HBO1 complex by directing KAT7/HBO1 specificity towards histone H3 'Lys-14' acetylation (H3K14ac), thereby promoting erythroid differentiation. In Mus musculus (Mouse), this protein is Bromodomain-containing protein 1.